Here is an 805-residue protein sequence, read N- to C-terminus: Sucrose synthase 1 (805 aa).

The segment at 274–751 (MVFNVVILSP…GLQRIYEKYT (478 aa)) is GT-B glycosyltransferase.

The protein belongs to the glycosyltransferase 1 family. Plant sucrose synthase subfamily.

The catalysed reaction is an NDP-alpha-D-glucose + D-fructose = a ribonucleoside 5'-diphosphate + sucrose + H(+). Functionally, sucrose-cleaving enzyme that provides UDP-glucose and fructose for various metabolic pathways. This is Sucrose synthase 1 from Tulipa gesneriana (Garden tulip).